Here is a 288-residue protein sequence, read N- to C-terminus: Diaminopimelate epimerase (288 aa).

Positions 13, 46, and 66 each coordinate substrate. Cysteine 75 (proton donor) is an active-site residue. Substrate is bound by residues glycine 76–asparagine 77, asparagine 166, asparagine 199, and glutamate 217–arginine 218. Cysteine 226 serves as the catalytic Proton acceptor. Glycine 227–threonine 228 lines the substrate pocket.

It belongs to the diaminopimelate epimerase family. Homodimer.

It localises to the cytoplasm. It catalyses the reaction (2S,6S)-2,6-diaminopimelate = meso-2,6-diaminopimelate. It functions in the pathway amino-acid biosynthesis; L-lysine biosynthesis via DAP pathway; DL-2,6-diaminopimelate from LL-2,6-diaminopimelate: step 1/1. Functionally, catalyzes the stereoinversion of LL-2,6-diaminopimelate (L,L-DAP) to meso-diaminopimelate (meso-DAP), a precursor of L-lysine and an essential component of the bacterial peptidoglycan. This Cupriavidus metallidurans (strain ATCC 43123 / DSM 2839 / NBRC 102507 / CH34) (Ralstonia metallidurans) protein is Diaminopimelate epimerase.